The sequence spans 86 residues: Large ribosomal subunit protein uL23 (86 aa).

The protein belongs to the universal ribosomal protein uL23 family. As to quaternary structure, part of the 50S ribosomal subunit. Contacts protein L29.

Binds to 23S rRNA. One of the proteins that surrounds the polypeptide exit tunnel on the outside of the ribosome. This chain is Large ribosomal subunit protein uL23, found in Methanococcus maripaludis (strain C5 / ATCC BAA-1333).